The following is a 313-amino-acid chain: Adhesin MafA 1/2 (313 aa).

The N-terminal stretch at 1 to 14 (MKTLLLLIPLVLTA) is a signal peptide. Cys-15 is lipidated: N-palmitoyl cysteine. Cys-15 carries the S-diacylglycerol cysteine lipid modification. A compositionally biased stretch (polar residues) spans 282 to 298 (GDTTAQNRPDFKQNNGK). Residues 282-313 (GDTTAQNRPDFKQNNGKNPDVGNEVIRRRKGG) are disordered.

It belongs to the MafA family.

Its subcellular location is the cell outer membrane. The chain is Adhesin MafA 1/2 (mafA1) from Neisseria meningitidis serogroup C (strain 053442).